A 60-amino-acid polypeptide reads, in one-letter code: Large ribosomal subunit protein uL30 (60 aa).

It belongs to the universal ribosomal protein uL30 family. As to quaternary structure, part of the 50S ribosomal subunit.

In Lysinibacillus sphaericus (strain C3-41), this protein is Large ribosomal subunit protein uL30.